The sequence spans 348 residues: Uroporphyrinogen decarboxylase (348 aa).

Residues 24-28, Asp-73, Tyr-150, Ser-205, and His-324 each bind substrate; that span reads RQAGR.

Belongs to the uroporphyrinogen decarboxylase family. As to quaternary structure, homodimer.

It is found in the cytoplasm. It carries out the reaction uroporphyrinogen III + 4 H(+) = coproporphyrinogen III + 4 CO2. The protein operates within porphyrin-containing compound metabolism; protoporphyrin-IX biosynthesis; coproporphyrinogen-III from 5-aminolevulinate: step 4/4. In terms of biological role, catalyzes the decarboxylation of four acetate groups of uroporphyrinogen-III to yield coproporphyrinogen-III. In Roseiflexus sp. (strain RS-1), this protein is Uroporphyrinogen decarboxylase.